The primary structure comprises 25 residues: Antifungal protein 1 (25 aa).

Positions glutamine 1 to alanine 25 are disordered. Basic and acidic residues predominate over residues phenylalanine 14–alanine 25.

Belongs to the 2S seed storage albumins family. In terms of tissue distribution, expressed in seed (at protein level). Not detected in pulp, stems and leaves.

In terms of biological role, has strong antifungal activity against T.harzianum, F.oxysporum and A.fumigatus with IC(50) values of 32 ug/ml, 34 ug/ml and 40 ug/ml, restectively. Lacks antifungal activity against R.solani, P.brasiliensis and C.albicans. The chain is Antifungal protein 1 from Passiflora edulis (Passion fruit).